Reading from the N-terminus, the 583-residue chain is Transmembrane protein 108 (583 aa).

A helical membrane pass occupies residues 7–27 (ALYCQLLSFLLTLALTEALVF). An interacts with SH3GL2 region spans residues 31-176 (EPSPRESLQV…ATIRRPPRPP (146 aa)). Disordered stretches follow at residues 71–360 (VTPT…GVFA) and 376–404 (VPSEGLPQGTSLAPQAPAHPTWASESTVS). Polar residues-rich tracts occupy residues 80–93 (PSSQATAPMATTTP) and 100–122 (PTNTISTIMATASTPHSEGSLST). Positions 177–187 (GSSRKGAGSSP) are enriched in low complexity. Residues 180–413 (RKGAGSSPRP…SQAEEKAVAT (234 aa)) are interacts with DST (isoform 1). Polar residues-rich tracts occupy residues 251–273 (YSSSPQPQTVAATSAPSRTSWVP), 310–319 (ASGTPASQQR), and 333–357 (DGSSHSDSWLTVTPGTSRPPSTNSG). The chain crosses the membrane as a helical span at residues 477 to 497 (IAWVILAISVPISSCSVLLTV). Positions 498–583 (CCLRRKKKPA…FVGNDQVSEI (86 aa)) are interaction with CYFIP2.

Interacts with DST (isoform 1). Interacts with SH3GL2. Interacts (via N-terminus) with CYFIP1 and CYFIP2; the interactions associate TMEM108 with the WAVE1 complex. Post-translationally, glycosylated.

The protein localises to the membrane. Its subcellular location is the postsynaptic density. The protein resides in the endosome membrane. It is found in the cell projection. It localises to the axon. The protein localises to the dendrite. Its subcellular location is the early endosome. In terms of biological role, transmembrane protein required for proper cognitive functions. Involved in the development of dentate gyrus (DG) neuron circuitry, is necessary for AMPA receptors surface expression and proper excitatory postsynaptic currents of DG granule neurons. Regulates the organization and stability of the microtubule network of sensory neurons to allow axonal transport. Through the interaction with DST, mediates the docking of the dynein/dynactin motor complex to vesicle cargos for retrograde axonal transport. In hippocampal neurons, required for BDNF-dependent dendrite outgrowth. Cooperates with SH3GL2 and recruits the WAVE1 complex to facilitate actin-dependent BDNF:NTRK2 early endocytic trafficking and mediate signaling from early endosomes. This is Transmembrane protein 108 from Bos taurus (Bovine).